We begin with the raw amino-acid sequence, 499 residues long: Glucosylglycerol-phosphate synthase (499 aa).

It belongs to the glycosyltransferase 20 family. In terms of assembly, interacts with GGP-P. Post-translationally, seems to be degraded, at least in vitro, by FtsH2. In an ftsH2 disruption strain inactive GGPS accumulates.

Its subcellular location is the cytoplasm. The enzyme catalyses ADP-alpha-D-glucose + sn-glycerol 3-phosphate = 2-O-(alpha-D-glucopyranosyl)-sn-glycerol 3-phosphate + ADP + H(+). It participates in glycan metabolism; glucosylglycerol biosynthesis. Involved in salt tolerance by producing GG-phosphate from ADP-glucose and glycerol-3-phosphate (G3P), an intermediate in the synthesis of the osmolyte glucosylglycerol (GG). The chain is Glucosylglycerol-phosphate synthase (ggpS) from Synechocystis sp. (strain ATCC 27184 / PCC 6803 / Kazusa).